Consider the following 493-residue polypeptide: Cysteine--tRNA ligase (493 aa).

Residue C29 participates in Zn(2+) binding. Residues 31–41 (VTVYDLCHLGH) carry the 'HIGH' region motif. The Zn(2+) site is built by C213, H238, and E242. The 'KMSKS' region motif lies at 270 to 274 (KMSKS). Residue K273 coordinates ATP.

The protein belongs to the class-I aminoacyl-tRNA synthetase family. Monomer. Zn(2+) serves as cofactor.

The protein resides in the cytoplasm. It carries out the reaction tRNA(Cys) + L-cysteine + ATP = L-cysteinyl-tRNA(Cys) + AMP + diphosphate. This Parasynechococcus marenigrum (strain WH8102) protein is Cysteine--tRNA ligase.